Reading from the N-terminus, the 307-residue chain is Glutaminase (307 aa).

The substrate site is built by Ser67, Asn117, Glu161, Asn168, Tyr192, Tyr243, and Val261.

This sequence belongs to the glutaminase family. As to quaternary structure, homotetramer.

The enzyme catalyses L-glutamine + H2O = L-glutamate + NH4(+). The chain is Glutaminase from Streptomyces coelicolor (strain ATCC BAA-471 / A3(2) / M145).